A 363-amino-acid polypeptide reads, in one-letter code: Peptide chain release factor 1 (363 aa).

Gln-237 bears the N5-methylglutamine mark. Residues 287-299 (EQHKEQASTRKEL) show a composition bias toward basic and acidic residues. Residues 287 to 306 (EQHKEQASTRKELIGSGDRS) are disordered.

Belongs to the prokaryotic/mitochondrial release factor family. Post-translationally, methylated by PrmC. Methylation increases the termination efficiency of RF1.

Its subcellular location is the cytoplasm. Its function is as follows. Peptide chain release factor 1 directs the termination of translation in response to the peptide chain termination codons UAG and UAA. The sequence is that of Peptide chain release factor 1 from Ruthia magnifica subsp. Calyptogena magnifica.